A 369-amino-acid chain; its full sequence is Porin-like protein BUsg_347 (369 aa).

The first 23 residues, 1–23 (MKNHKSLAILIPMLFAGSTAVNA), serve as a signal peptide directing secretion.

The protein belongs to the Gram-negative porin family. Homotrimer.

The protein localises to the cell outer membrane. Functionally, forms pores that allow passive diffusion of small molecules across the membrane. This chain is Porin-like protein BUsg_347, found in Buchnera aphidicola subsp. Schizaphis graminum (strain Sg).